The chain runs to 66 residues: MSNALTNIFYKYVARRNSTWMAGAILGAFVLDSTVSGAVNTFFDSVNKGKLWKDVYAERVKKGISQ.

Over Met-1–Trp-20 the chain is Mitochondrial matrix. A helical transmembrane segment spans residues Met-21–Val-46. At Asn-47–Gln-66 the chain is on the mitochondrial intermembrane side.

The protein belongs to the UQCR10/QCR9 family. Component of the ubiquinol-cytochrome c oxidoreductase (cytochrome b-c1 complex, complex III, CIII), a multisubunit enzyme composed of 3 respiratory subunits cytochrome b, cytochrome c1 and Rieske protein, 2 core protein subunits, and additional low-molecular weight protein subunits. The complex exists as an obligatory dimer and forms supercomplexes (SCs) in the inner mitochondrial membrane with cytochrome c oxidase (complex IV, CIV).

It is found in the mitochondrion inner membrane. Component of the ubiquinol-cytochrome c oxidoreductase, a multisubunit transmembrane complex that is part of the mitochondrial electron transport chain which drives oxidative phosphorylation. The respiratory chain contains 3 multisubunit complexes succinate dehydrogenase (complex II, CII), ubiquinol-cytochrome c oxidoreductase (cytochrome b-c1 complex, complex III, CIII) and cytochrome c oxidase (complex IV, CIV), that cooperate to transfer electrons derived from NADH and succinate to molecular oxygen, creating an electrochemical gradient over the inner membrane that drives transmembrane transport and the ATP synthase. The cytochrome b-c1 complex catalyzes electron transfer from ubiquinol to cytochrome c, linking this redox reaction to translocation of protons across the mitochondrial inner membrane, with protons being carried across the membrane as hydrogens on the quinol. In the process called Q cycle, 2 protons are consumed from the matrix, 4 protons are released into the intermembrane space and 2 electrons are passed to cytochrome c. The protein is Probable cytochrome b-c1 complex subunit 9 of Dictyostelium discoideum (Social amoeba).